We begin with the raw amino-acid sequence, 723 residues long: Nuclear intron maturase 3, mitochondrial (723 aa).

The N-terminal 26 residues, 1 to 26, are a transit peptide targeting the mitochondrion; it reads MVLRLRVHSFYNRGISFLVSSSLRNL. The tract at residues 532–597 is intron maturase type-2; degenerate; it reads VSAPEELVRK…HYTKDLRVSD (66 aa). Residues 646–700 form a THAP-type zinc finger; it reads CAASFCERSDTIMHRVHLLQNRLHINPLDEEKWVPGMGTIHSALNRKCLPLCSTH.

The protein belongs to the plant nuclear intron maturase (nMat) family.

The protein resides in the mitochondrion. In terms of biological role, nuclear-encoded maturase required for splicing of group-II introns in mitochondria. Necessary for mitochondrial biogenesis during early developmental stages. This Arabidopsis thaliana (Mouse-ear cress) protein is Nuclear intron maturase 3, mitochondrial.